Reading from the N-terminus, the 53-residue chain is GRPSARYDAPYCSEEELQACDCSHNPVRDACQCAYDPAGSPACDCYCVEPWRR.

A propeptide spanning residues 1-5 (GRPSA) is cleaved from the precursor.

In terms of processing, contains 4 disulfide bonds. As to expression, expressed by the venom duct.

The protein resides in the secreted. Functionally, probable neurotoxin with unknown target. Possibly targets ion channels. This is Conotoxin Cal22e from Californiconus californicus (California cone).